Reading from the N-terminus, the 119-residue chain is Large ribosomal subunit protein bL19 (119 aa).

This sequence belongs to the bacterial ribosomal protein bL19 family.

In terms of biological role, this protein is located at the 30S-50S ribosomal subunit interface and may play a role in the structure and function of the aminoacyl-tRNA binding site. This is Large ribosomal subunit protein bL19 (rplS) from Mycoplasma pneumoniae (strain ATCC 29342 / M129 / Subtype 1) (Mycoplasmoides pneumoniae).